A 149-amino-acid polypeptide reads, in one-letter code: UPF0260 protein Pmen_1776 (149 aa).

Belongs to the UPF0260 family.

This chain is UPF0260 protein Pmen_1776, found in Ectopseudomonas mendocina (strain ymp) (Pseudomonas mendocina).